The following is a 330-amino-acid chain: Phosphate acyltransferase (330 aa).

The protein belongs to the PlsX family. Homodimer. Probably interacts with PlsY.

It is found in the cytoplasm. The enzyme catalyses a fatty acyl-[ACP] + phosphate = an acyl phosphate + holo-[ACP]. Its pathway is lipid metabolism; phospholipid metabolism. Its function is as follows. Catalyzes the reversible formation of acyl-phosphate (acyl-PO(4)) from acyl-[acyl-carrier-protein] (acyl-ACP). This enzyme utilizes acyl-ACP as fatty acyl donor, but not acyl-CoA. The polypeptide is Phosphate acyltransferase (Streptococcus pneumoniae (strain P1031)).